We begin with the raw amino-acid sequence, 1234 residues long: DNA-directed RNA polymerase subunit beta (1234 aa).

The tract at residues Glu-1169–His-1234 is disordered. Composition is skewed to acidic residues over residues Val-1171–Val-1180 and Glu-1191–His-1234.

The protein belongs to the RNA polymerase beta chain family. In terms of assembly, the RNAP catalytic core consists of 2 alpha, 1 beta, 1 beta' and 1 omega subunit. When a sigma factor is associated with the core the holoenzyme is formed, which can initiate transcription.

The enzyme catalyses RNA(n) + a ribonucleoside 5'-triphosphate = RNA(n+1) + diphosphate. Functionally, DNA-dependent RNA polymerase catalyzes the transcription of DNA into RNA using the four ribonucleoside triphosphates as substrates. The protein is DNA-directed RNA polymerase subunit beta of Clostridium botulinum (strain Langeland / NCTC 10281 / Type F).